The primary structure comprises 238 residues: Large ribosomal subunit protein uL1 (238 aa).

It belongs to the universal ribosomal protein uL1 family. As to quaternary structure, part of the 50S ribosomal subunit.

Binds directly to 23S rRNA. The L1 stalk is quite mobile in the ribosome, and is involved in E site tRNA release. Its function is as follows. Protein L1 is also a translational repressor protein, it controls the translation of the L11 operon by binding to its mRNA. The chain is Large ribosomal subunit protein uL1 from Frankia alni (strain DSM 45986 / CECT 9034 / ACN14a).